Consider the following 488-residue polypeptide: Probable malate:quinone oxidoreductase (488 aa).

The protein belongs to the MQO family. Requires FAD as cofactor.

The enzyme catalyses (S)-malate + a quinone = a quinol + oxaloacetate. The protein operates within carbohydrate metabolism; tricarboxylic acid cycle; oxaloacetate from (S)-malate (quinone route): step 1/1. The chain is Probable malate:quinone oxidoreductase from Neisseria meningitidis serogroup A / serotype 4A (strain DSM 15465 / Z2491).